Reading from the N-terminus, the 347-residue chain is FK506-binding protein-like (347 aa).

Residues 1 to 36 are disordered; sequence METSLISPMKENNTAQPQQREENTQQNLNAAVPIKQ. Thr-3 bears the Phosphothreonine mark. 3 TPR repeats span residues 208 to 241, 250 to 283, and 284 to 317; these read AKEE…LLTL, TILH…EPGH, and LKAL…DPKN.

Forms a ternary complex with CDKN1A/p21 and HSP90AB1/Hsp90.

In terms of biological role, may be involved in response to X-ray. Regulates p21 protein stability by binding to Hsp90 and p21. The protein is FK506-binding protein-like (Fkbpl) of Rattus norvegicus (Rat).